The chain runs to 257 residues: Triosephosphate isomerase (257 aa).

9 to 11 (NWK) is a binding site for substrate. His97 functions as the Electrophile in the catalytic mechanism. Glu169 acts as the Proton acceptor in catalysis. Substrate contacts are provided by residues Gly175, Ser214, and 235 to 236 (GG).

The protein belongs to the triosephosphate isomerase family. Homodimer.

It localises to the cytoplasm. It catalyses the reaction D-glyceraldehyde 3-phosphate = dihydroxyacetone phosphate. The protein operates within carbohydrate biosynthesis; gluconeogenesis. Its pathway is carbohydrate degradation; glycolysis; D-glyceraldehyde 3-phosphate from glycerone phosphate: step 1/1. Functionally, involved in the gluconeogenesis. Catalyzes stereospecifically the conversion of dihydroxyacetone phosphate (DHAP) to D-glyceraldehyde-3-phosphate (G3P). The protein is Triosephosphate isomerase of Vibrio cholerae serotype O1 (strain ATCC 39315 / El Tor Inaba N16961).